The chain runs to 447 residues: Alliin lyase (447 aa).

The propeptide occupies 1-2; that stretch reads QA. The region spanning 15–61 is the EGF-like; atypical domain; that stretch reads EAVANINCSGHGRAFLDGILSDGSPKCECNTCYTGADCSQKITGCSA. Asn21 carries N-linked (GlcNAc...) asparagine glycosylation. 3 disulfide bridges follow: Cys22-Cys41, Cys43-Cys52, and Cys46-Cys59. 94-102 lines the chloride pocket; sequence YFFNPVSNF. N-linked (GlcNAc...) asparagine glycosylation is found at Asn148 and Asn193. Residue Lys253 is modified to N6-(pyridoxal phosphate)lysine. The N-linked (GlcNAc...) asparagine glycan is linked to Asn330. Cys370 and Cys378 are oxidised to a cystine.

It belongs to the alliinase family. Homodimer. Pyridoxal 5'-phosphate serves as cofactor.

Its subcellular location is the vacuole. The enzyme catalyses an S-alkyl-L-cysteine S-oxide = an S-alkyl sulfenate + 2-aminoprop-2-enoate. The protein is Alliin lyase of Allium cepa var. aggregatum (Shallot).